The chain runs to 511 residues: DELLA protein RGL1 (511 aa).

The span at 1–11 (MKREHNHRESS) shows a compositional bias: basic and acidic residues. The interval 1–20 (MKREHNHRESSAGEGGSSSM) is disordered. Positions 32 to 36 (DELLV) match the DELLA motif motif. Positions 54–58 (LEQLE) match the LEXLE motif motif. Positions 73 to 77 (VHYNP) match the VHYNP motif motif. The GRAS domain maps to 143–506 (LDSQETGVRL…RPLIATSAWR (364 aa)). The leucine repeat I (LRI) stretch occupies residues 150 to 204 (VRLVHALLACAEAVQQNNLKLADALVKHVGLLASSQAGAMRKVATYFAEGLARRI). Residues 157–161 (LACAE) carry the LxCxE motif motif. The segment at 223–288 (QIHFYESCPY…NGPPDFRLTG (66 aa)) is VHIID. Positions 254 to 258 (VHVID) match the VHIID motif. Residues 298 to 330 (EVGWKLGQLASTIGVNFEFKSIALNNLSDLKPE) are leucine repeat II (LRII). The PFYRE stretch occupies residues 341-427 (VAVNSVFELH…ELFLGRQILN (87 aa)). Residues 349-353 (LHRLL) carry the LXXLL motif motif. The tract at residues 430–506 (ACEGEDRVER…RPLIATSAWR (77 aa)) is SAW.

The protein belongs to the GRAS family. DELLA subfamily. Interacts directly with the GID2/SLY1 component of the SCF(GID2) complex. Interacts (via N-terminus) with GID1A, GID1B and GID1B (via N-terminus). Interacts with the BOI proteins BOI, BRG1, BRG2 and BRG3. Binds to and coactivates GAF1/IDD2 and ENY/IDD1. Post-translationally, phosphorylated. May be ubiquitinated, as suggested by its interaction with GID2. Ubiquitination is however unsure since in contrast to other DELLA proteins, it is not ubiquitinated and degraded upon GA application. Nevertheless, ubiquitination may be triggered by other processes. In terms of tissue distribution, predominantly expressed in germinating seeds and flowers and siliques. Highly expressed in inflorescences and weakly or not expressed in rosette leaves, etiolated seedlings, siliques, mature stems and roots. RGA and GAI transcripts were detected at slightly varying levels in all tissues examined. RGL2 signal was undetected, and RGL3 signal was very weak in all tissues examined (rosette leaves, seedlings, inflorescences, and siliques) except inflorescences. In the flower, it is expressed in developing ovules as well as in developing anthers throughout microspore development.

Its subcellular location is the nucleus. In terms of biological role, probable transcriptional regulator that acts as a repressor of the gibberellin (GA) signaling pathway. No effect of the BOI proteins on its stability. Probably acts by participating in large multiprotein complexes that repress transcription of GA-inducible genes. Has overlapping but distinct roles in GA signaling compared to RGA and GAI. Regulates the floral development. May also participate in seed germination and in ovule and anther development. Its activity is probably regulated by other phytohormones such as auxin and ethylene. The chain is DELLA protein RGL1 (RGL1) from Arabidopsis thaliana (Mouse-ear cress).